Here is a 680-residue protein sequence, read N- to C-terminus: DNA-directed RNA polymerase subunit beta' (680 aa).

Zn(2+) is bound by residues Cys69, Cys71, Cys87, and Cys90. Asp489, Asp491, and Asp493 together coordinate Mg(2+).

This sequence belongs to the RNA polymerase beta' chain family. RpoC1 subfamily. As to quaternary structure, in plastids the minimal PEP RNA polymerase catalytic core is composed of four subunits: alpha, beta, beta', and beta''. When a (nuclear-encoded) sigma factor is associated with the core the holoenzyme is formed, which can initiate transcription. Mg(2+) serves as cofactor. It depends on Zn(2+) as a cofactor.

The protein resides in the plastid. The protein localises to the chloroplast. The catalysed reaction is RNA(n) + a ribonucleoside 5'-triphosphate = RNA(n+1) + diphosphate. Functionally, DNA-dependent RNA polymerase catalyzes the transcription of DNA into RNA using the four ribonucleoside triphosphates as substrates. In Lobularia maritima (Sweet alyssum), this protein is DNA-directed RNA polymerase subunit beta'.